Reading from the N-terminus, the 387-residue chain is tRNA-specific 2-thiouridylase MnmA (387 aa).

Residues 6–13 (AMSGGVDS) and Leu32 contribute to the ATP site. Cys101 serves as the catalytic Nucleophile. The cysteines at positions 101 and 199 are disulfide-linked. Residue Gly125 coordinates ATP. The interval 148-150 (KDQ) is interaction with tRNA. The Cysteine persulfide intermediate role is filled by Cys199.

Belongs to the MnmA/TRMU family.

The protein resides in the cytoplasm. It catalyses the reaction S-sulfanyl-L-cysteinyl-[protein] + uridine(34) in tRNA + AH2 + ATP = 2-thiouridine(34) in tRNA + L-cysteinyl-[protein] + A + AMP + diphosphate + H(+). Its function is as follows. Catalyzes the 2-thiolation of uridine at the wobble position (U34) of tRNA, leading to the formation of s(2)U34. This chain is tRNA-specific 2-thiouridylase MnmA, found in Clavibacter michiganensis subsp. michiganensis (strain NCPPB 382).